Reading from the N-terminus, the 497-residue chain is Validamine 7-phosphate valienyltransferase (497 aa).

Residue Asp158 coordinates GDP-valienol. His182 lines the validamine 7-phosphate pocket. GDP-valienol-binding positions include Arg290, Lys295, Arg321, 325–326, 361–362, and Thr366; these read NR and ND. Residue 383 to 386 participates in validamine 7-phosphate binding; sequence DGQN. GDP-valienol-binding positions include 387–388 and Glu391; that span reads LS.

It belongs to the glycosyltransferase 20 family. Homodimer.

It carries out the reaction validamine 7-phosphate + GDP-valienol = validoxylamine A 7'-phosphate + GDP + H(+). In terms of biological role, involved in the biosynthesis of the antifungal agent validamycin A. Catalyzes the condensation between GDP-valienol and validamine 7-phosphate via a nonglycosidic C-N bond formation to yield validoxylamine A 7'-phosphate. This is Validamine 7-phosphate valienyltransferase from Streptomyces hygroscopicus subsp. limoneus.